The following is a 427-amino-acid chain: Glutamate-1-semialdehyde 2,1-aminomutase (427 aa).

An N6-(pyridoxal phosphate)lysine modification is found at Lys-265.

This sequence belongs to the class-III pyridoxal-phosphate-dependent aminotransferase family. HemL subfamily. As to quaternary structure, homodimer. Pyridoxal 5'-phosphate is required as a cofactor.

It localises to the cytoplasm. The catalysed reaction is (S)-4-amino-5-oxopentanoate = 5-aminolevulinate. It functions in the pathway porphyrin-containing compound metabolism; protoporphyrin-IX biosynthesis; 5-aminolevulinate from L-glutamyl-tRNA(Glu): step 2/2. The chain is Glutamate-1-semialdehyde 2,1-aminomutase from Colwellia psychrerythraea (strain 34H / ATCC BAA-681) (Vibrio psychroerythus).